We begin with the raw amino-acid sequence, 491 residues long: Probable cytosol aminopeptidase (491 aa).

Mn(2+) contacts are provided by Lys-263 and Asp-268. Residue Lys-275 is part of the active site. Mn(2+) contacts are provided by Asp-286, Asp-345, and Glu-347. The active site involves Arg-349.

This sequence belongs to the peptidase M17 family. The cofactor is Mn(2+).

The protein resides in the cytoplasm. The catalysed reaction is Release of an N-terminal amino acid, Xaa-|-Yaa-, in which Xaa is preferably Leu, but may be other amino acids including Pro although not Arg or Lys, and Yaa may be Pro. Amino acid amides and methyl esters are also readily hydrolyzed, but rates on arylamides are exceedingly low.. It carries out the reaction Release of an N-terminal amino acid, preferentially leucine, but not glutamic or aspartic acids.. In terms of biological role, presumably involved in the processing and regular turnover of intracellular proteins. Catalyzes the removal of unsubstituted N-terminal amino acids from various peptides. The chain is Probable cytosol aminopeptidase from Haemophilus influenzae (strain PittEE).